The sequence spans 222 residues: Cyclin-U2-1 (222 aa).

It belongs to the cyclin family. Cyclin U/P subfamily. As to quaternary structure, interacts with CDKA-1. In terms of tissue distribution, expressed in roots, stems and flowers. Expressed in the shoot apex, leaf primordia and young leaves.

This is Cyclin-U2-1 (CYCU2-1) from Arabidopsis thaliana (Mouse-ear cress).